A 650-amino-acid chain; its full sequence is Chaperone protein DnaK (650 aa).

Position 200 is a phosphothreonine; by autocatalysis (Thr-200). Positions 613 to 634 are enriched in low complexity; it reads QAGAAGAAGAAAAEGAAQGGAQ. Positions 613-637 are disordered; that stretch reads QAGAAGAAGAAAAEGAAQGGAQTAD.

It belongs to the heat shock protein 70 family.

Its function is as follows. Acts as a chaperone. This is Chaperone protein DnaK from Burkholderia thailandensis (strain ATCC 700388 / DSM 13276 / CCUG 48851 / CIP 106301 / E264).